Here is a 339-residue protein sequence, read N- to C-terminus: Serine/threonine-protein kinase SRK2J (339 aa).

Positions 4 to 260 (YEMVKDLGFG…LKEIKSHAWF (257 aa)) constitute a Protein kinase domain. ATP is bound by residues 10 to 18 (LGFGNFGLA) and Lys-33. Catalysis depends on Asp-123, which acts as the Proton acceptor. Residues 308–339 (SRPVESLGSDKKDDDEEEYLDANDEEWYDDYA) are disordered. Acidic residues predominate over residues 320–339 (DDDEEEYLDANDEEWYDDYA).

This sequence belongs to the protein kinase superfamily. Ser/Thr protein kinase family. In terms of tissue distribution, expressed in seedlings.

It catalyses the reaction L-seryl-[protein] + ATP = O-phospho-L-seryl-[protein] + ADP + H(+). The catalysed reaction is L-threonyl-[protein] + ATP = O-phospho-L-threonyl-[protein] + ADP + H(+). The polypeptide is Serine/threonine-protein kinase SRK2J (SRK2J) (Arabidopsis thaliana (Mouse-ear cress)).